We begin with the raw amino-acid sequence, 582 residues long: Aspartate--tRNA ligase (582 aa).

An L-aspartate-binding site is contributed by Glu-174. Residues 198 to 201 (QITK) are aspartate. An L-aspartate-binding site is contributed by Arg-220. ATP is bound by residues 220–222 (RDE) and Gln-229. His-443 provides a ligand contact to L-aspartate. Residue Glu-477 coordinates ATP. Arg-484 is an L-aspartate binding site. 529 to 532 (GLDR) provides a ligand contact to ATP.

Belongs to the class-II aminoacyl-tRNA synthetase family. Type 1 subfamily. Homodimer.

The protein localises to the cytoplasm. It carries out the reaction tRNA(Asp) + L-aspartate + ATP = L-aspartyl-tRNA(Asp) + AMP + diphosphate. Functionally, catalyzes the attachment of L-aspartate to tRNA(Asp) in a two-step reaction: L-aspartate is first activated by ATP to form Asp-AMP and then transferred to the acceptor end of tRNA(Asp). This is Aspartate--tRNA ligase from Streptococcus pyogenes serotype M18 (strain MGAS8232).